We begin with the raw amino-acid sequence, 456 residues long: Probable tRNA(Ile)-lysidine synthase (456 aa).

An ATP-binding site is contributed by 30–35 (SGGVDS).

This sequence belongs to the tRNA(Ile)-lysidine synthase family.

It localises to the cytoplasm. The enzyme catalyses cytidine(34) in tRNA(Ile2) + L-lysine + ATP = lysidine(34) in tRNA(Ile2) + AMP + diphosphate + H(+). In terms of biological role, ligates lysine onto the cytidine present at position 34 of the AUA codon-specific tRNA(Ile) that contains the anticodon CAU, in an ATP-dependent manner. Cytidine is converted to lysidine, thus changing the amino acid specificity of the tRNA from methionine to isoleucine. The sequence is that of Probable tRNA(Ile)-lysidine synthase from Schizosaccharomyces pombe (strain 972 / ATCC 24843) (Fission yeast).